The sequence spans 210 residues: Tetraspanin-31 (210 aa).

Residues 1–12 (MVCGGFACSRNA) lie on the Cytoplasmic side of the membrane. A helical transmembrane segment spans residues 13 to 33 (LCALNVVYMLVGFLLIGVAAW). The Extracellular portion of the chain corresponds to 34–44 (GKGLGVVSSIH). The chain crosses the membrane as a helical span at residues 45–65 (IIGGVIAVGVFLLLIAVAGLV). At 66–72 (GAANHHQ) the chain is on the cytoplasmic side. A helical transmembrane segment spans residues 73 to 93 (VLLFFYMIILGLVFIFQFGIS). Residues 94 to 173 (CSCLAINRNT…FLKHSDKALK (80 aa)) lie on the Extracellular side of the membrane. Asparagine 109, asparagine 117, and asparagine 134 each carry an N-linked (GlcNAc...) asparagine glycan. Residues 174 to 194 (ILGGVGLFFSFTEILGVWLAM) traverse the membrane as a helical segment. Residues 195–210 (RFRNQKDPRANPSAFL) lie on the Cytoplasmic side of the membrane.

The protein belongs to the tetraspanin (TM4SF) family.

It localises to the membrane. This is Tetraspanin-31 (Tspan31) from Mus musculus (Mouse).